Consider the following 926-residue polypeptide: Protein Niban 1 (926 aa).

The N-myristoyl glycine moiety is linked to residue G2. Phosphoserine occurs at positions 578, 581, 595, 601, and 640. Disordered regions lie at residues 604 to 699 (LPGA…VPGS) and 719 to 889 (VEND…EQVN). Over residues 661 to 672 (VENTAGPLSSHL) the composition is skewed to polar residues. Phosphoserine is present on S699. Residues 733–745 (NIKEEESKIHPEA) show a composition bias toward basic and acidic residues. S755 carries the phosphoserine modification. Over residues 756–767 (CEEREVREKEAQ) the composition is skewed to basic and acidic residues. The segment covering 784 to 797 (GRGSTSQSTSGGLT) has biased composition (low complexity). Over residues 840 to 854 (VTVTPQEDATLSSNP) the composition is skewed to polar residues. S923 is modified (phosphoserine).

The protein belongs to the Niban family.

The protein resides in the cytoplasm. It localises to the membrane. In terms of biological role, regulates phosphorylation of a number of proteins involved in translation regulation including EIF2A, EIF4EBP1 and RPS6KB1. May be involved in the endoplasmic reticulum stress response. The chain is Protein Niban 1 from Mus musculus (Mouse).